The following is a 323-amino-acid chain: Acetyl esterase (323 aa).

An Involved in the stabilization of the negatively charged intermediate by the formation of the oxyanion hole motif is present at residues histidine 91–glycine 93. Active-site residues include serine 165, aspartate 262, and histidine 292.

Belongs to the 'GDXG' lipolytic enzyme family. Homodimer. Interacts with MalT and MelA.

Its subcellular location is the cytoplasm. Its function is as follows. Displays esterase activity towards short chain fatty esters (acyl chain length of up to 8 carbons). Able to hydrolyze triacetylglycerol (triacetin) and tributyrylglycerol (tributyrin), but not trioleylglycerol (triolein) or cholesterol oleate. Negatively regulates MalT activity by antagonizing maltotriose binding. Inhibits MelA galactosidase activity. The protein is Acetyl esterase of Salmonella schwarzengrund (strain CVM19633).